The primary structure comprises 199 residues: Peroxynitrite isomerase (199 aa).

The GXWXGXG motif lies at 20–26 (GVWEGSG). Heme b is bound by residues lysine 158 and histidine 190.

This sequence belongs to the nitrobindin family. Homodimer. Heme b is required as a cofactor.

The enzyme catalyses peroxynitrite = nitrate. The protein operates within nitrogen metabolism. Functionally, heme-binding protein able to scavenge peroxynitrite and to protect free L-tyrosine against peroxynitrite-mediated nitration, by acting as a peroxynitrite isomerase that converts peroxynitrite to nitrate. Therefore, this protein likely plays a role in peroxynitrite sensing and in the detoxification of reactive nitrogen and oxygen species (RNS and ROS, respectively). Is able to bind nitric oxide (NO) in vitro, but may act as a sensor of peroxynitrite levels in vivo. This is Peroxynitrite isomerase from Clavibacter sepedonicus (Clavibacter michiganensis subsp. sepedonicus).